A 361-amino-acid chain; its full sequence is Alanine racemase 2 (361 aa).

The active-site Proton acceptor; specific for D-alanine is K30. K30 carries the N6-(pyridoxal phosphate)lysine modification. Position 122 (R122) interacts with substrate. Y256 functions as the Proton acceptor; specific for L-alanine in the catalytic mechanism. M303 provides a ligand contact to substrate.

The protein belongs to the alanine racemase family. The cofactor is pyridoxal 5'-phosphate.

The catalysed reaction is L-alanine = D-alanine. It participates in amino-acid biosynthesis; D-alanine biosynthesis; D-alanine from L-alanine: step 1/1. Its function is as follows. Catalyzes the interconversion of L-alanine and D-alanine. May also act on other amino acids. The polypeptide is Alanine racemase 2 (alr2) (Staphylococcus aureus (strain COL)).